An 833-amino-acid chain; its full sequence is Leucine--tRNA ligase (833 aa).

Residues 41–52 (PYPSGAGLHVGH) carry the 'HIGH' region motif. A 'KMSKS' region motif is present at residues 610 to 614 (KMSKS). An ATP-binding site is contributed by Lys-613.

The protein belongs to the class-I aminoacyl-tRNA synthetase family.

Its subcellular location is the cytoplasm. The enzyme catalyses tRNA(Leu) + L-leucine + ATP = L-leucyl-tRNA(Leu) + AMP + diphosphate. The sequence is that of Leucine--tRNA ligase from Streptococcus pneumoniae (strain ATCC 700669 / Spain 23F-1).